The chain runs to 246 residues: Dof zinc finger protein DOF4.7 (246 aa).

Composition is skewed to polar residues over residues 1-12 and 27-37; these read MMTSSHQSNTTG and QINNKEPSPAT. A disordered region spans residues 1–39; it reads MMTSSHQSNTTGFKPRRIKTTAKPPRQINNKEPSPATQP. Residues 41 to 95 form a Dof-type zinc finger; sequence LKCPRCDSVNTKFCYYNNYSLSQPRHYCKNCRRYWTRGGALRNVPIGGSTRNKNK. 4 residues coordinate Zn(2+): Cys43, Cys46, Cys68, and Cys71. Positions 216–235 are disordered; it reads GGATSGNHEDNDDGEGNLGN.

In terms of assembly, interacts with ZFP2. Highly expressed at the base of all organs of the flower, especially in the abscission zone (AZ) of petals, stamens and sepals. Expressed at low levels in sepals, filaments, stigmatic papillae, tips of young siliques, and at the base of pedicels and leaf trichomes.

The protein localises to the nucleus. In terms of biological role, transcription factor that binds specifically to a 5'-AA[AG]G-3' consensus core sequence. Involved in the negative regulation of floral organ abscission by binding to the typical DOF 5'-AAAG-3' sequences in the promoter of ADPG2/PGAZAT, and by down-regulating its expression. ADPG2/PGAZAT is an abscission-related and cell wall hydrolyzing polygalacturonase. May act through the interaction with ZFP2, an abscission-related transcription factor. In Arabidopsis thaliana (Mouse-ear cress), this protein is Dof zinc finger protein DOF4.7.